The chain runs to 352 residues: Phosphoribosylformylglycinamidine cyclo-ligase (352 aa).

This sequence belongs to the AIR synthase family.

It is found in the cytoplasm. The catalysed reaction is 2-formamido-N(1)-(5-O-phospho-beta-D-ribosyl)acetamidine + ATP = 5-amino-1-(5-phospho-beta-D-ribosyl)imidazole + ADP + phosphate + H(+). It participates in purine metabolism; IMP biosynthesis via de novo pathway; 5-amino-1-(5-phospho-D-ribosyl)imidazole from N(2)-formyl-N(1)-(5-phospho-D-ribosyl)glycinamide: step 2/2. The sequence is that of Phosphoribosylformylglycinamidine cyclo-ligase from Pseudomonas putida (strain GB-1).